The primary structure comprises 505 residues: MAMWRSSDSMVYLPPPSVAKVVNTDDYVTRTGIYYYAGSSRLLTVGHPYFKVGMNGGRKQDIPKVSAYQYRVFRVTLPDPNKFSIPDASLYNPETQRLVWACVGVEVGRGQPLGVGISGHPLYNRQDDTENSPFSSTTNKDSRDNVSVDYKQTQLCIIGCVPAIGEHWGKGKACKPNNVSTGDCPPLELVNTPIEDGDMIDTGYGAMDFGALQETKSEVPLDICQSICKYPDYLQMSADVYGDSMFFCLRREQLFARHFWNRGGMVGDAIPAQLYIKGTDIRANPGSSVYCPSPSGSMVTSDSQLFNKPYWLHKAQGHNNGICWHNQLFLTVVDTTRSTNFTLSTSIESSIPSTYDPSKFKEYTRHVEEYDLQFIFQLCTVTLTTDVMSYIHTMNSSILDNWNFAVAPPPSASLVDTYRYLQSAAITCQKDAPAPEKKDPYDGLKFWNVDLREKFSLELDQFPLGRKFLLQARVRRRPTIGPRKRPAASTSSSSATKHKRKRVSK.

Disordered stretches follow at residues 118 to 143 (SGHP…KDSR) and 475 to 505 (RRRP…RVSK). Basic residues-rich tracts occupy residues 475 to 486 (RRRPTIGPRKRP) and 496 to 505 (TKHKRKRVSK).

This sequence belongs to the papillomaviridae L1 protein family. As to quaternary structure, self-assembles into homopentamers. The capsid has an icosahedral symmetry and consists of 72 capsomers, with each capsomer being a pentamer of L1. Interacts with the minor capsid protein L2; this interaction is necessary for viral genome encapsidation. Interacts with protein E2; this interaction enhances E2-dependent replication and transcription activation.

It localises to the virion. The protein localises to the host nucleus. Functionally, forms an icosahedral capsid with a T=7 symmetry and a 50 nm diameter. The capsid is composed of 72 pentamers linked to each other by disulfide bonds and associated with L2 proteins. Binds to heparan sulfate proteoglycans on cell surface of basal layer keratinocytes to provide initial virion attachment. This binding mediates a conformational change in the virus capsid that facilitates efficient infection. The virion enters the host cell via endocytosis. During virus trafficking, L1 protein dissociates from the viral DNA and the genomic DNA is released to the host nucleus. The virion assembly takes place within the cell nucleus. Encapsulates the genomic DNA together with protein L2. In Homo sapiens (Human), this protein is Major capsid protein L1.